The chain runs to 387 residues: Methyltransferase phomM (387 aa).

Residues 98–223 (PHRPKDLHIL…QSVADLFTTL (126 aa)) are methyltransferase domain.

The protein belongs to the class I-like SAM-binding methyltransferase superfamily. Erg6/SMT family.

It functions in the pathway mycotoxin biosynthesis. Functionally, methyltransferase; part of the gene cluster that mediates the biosynthesis of the phomopsins, a group of hexapeptide mycotoxins which infects lupins and causes lupinosis disease in livestock. Within the pathway, phomM acts as an S-adenosylmethionine-dependent alpha-N-methyltransferase that catalyzes two successive N-methylation reactions, converting N-desmethyl-phomopsin A to phomopsin A and phomopsin A further to an N,N-dimethylated congener called phomopsin E. The pathway starts with the processing of the precursor phomA by several endopeptidases including kexin proteases as well as the cluster-specific S41 family peptidase phomP1 and the oligopeptidase phomG to produce 10 identical copies of the hexapeptide Tyr-Val-Ile-Pro-Ile-Asp. After being excised from the precursor peptide, the core peptides are cyclized and modified post-translationally by enzymes encoded within the gene cluster. The timing and order of proteolysis of the phomA precursor and PTMs are still unknown. Two tyrosinase-like enzymes, phomQ1 and phomQ2, catalyze the chlorination and hydroxylation of Tyr, respectively. PhomYb, is proposed to be involved in the construction of the macrocyclic structure. The other 4 ustYa family proteins may be involved in PTMs that generate the unique structure of phomopsin A. PhomYa is required for the hydroxylation of C-beta of Tyr. PhomYc, phomYd, and phomYe are responsible for the biosynthesis of 2,3-dehydroisoleucine (dIle), 2,3-dehydroaspartic acid (dAsp), and 3,4-dehydroproline (dPro), respectively. While dIle formation by phomYc is indispensable for the installation of dAsp by phomYd, the order of the other PTMs have not been elucidated yet. Most of the biosynthetic enzymes likely have broad substrate specificity, and thus, there might be a metabolic grid from a precursor to phomopsin A. The enzyme(s) responsible for the biosynthesis of 3,4-dehydrovaline (dVal) have also not been identified yet. Finally, phomM acts as an S-adenosylmethionine-dependent alpha-N-methyltransferase that catalyzes two successive N-methylation reactions, converting N-desmethyl-phomopsin A to phomopsin A and phomopsin A further to an N,N-dimethylated congener called phomopsin E. This Diaporthe leptostromiformis (Lupinosis disease fungus) protein is Methyltransferase phomM.